The chain runs to 876 residues: Alanine--tRNA ligase (876 aa).

The Zn(2+) site is built by H560, H564, C662, and H666.

This sequence belongs to the class-II aminoacyl-tRNA synthetase family. Zn(2+) is required as a cofactor.

It is found in the cytoplasm. It carries out the reaction tRNA(Ala) + L-alanine + ATP = L-alanyl-tRNA(Ala) + AMP + diphosphate. Its function is as follows. Catalyzes the attachment of alanine to tRNA(Ala) in a two-step reaction: alanine is first activated by ATP to form Ala-AMP and then transferred to the acceptor end of tRNA(Ala). Also edits incorrectly charged Ser-tRNA(Ala) and Gly-tRNA(Ala) via its editing domain. This Synechococcus elongatus (strain ATCC 33912 / PCC 7942 / FACHB-805) (Anacystis nidulans R2) protein is Alanine--tRNA ligase.